A 195-amino-acid polypeptide reads, in one-letter code: Pyruvoyl-dependent arginine decarboxylase AaxB (195 aa).

Ser-53 is modified (pyruvic acid (Ser)).

Belongs to the pyruvoyl-dependent arginine decarboxylase family. In terms of assembly, trimer of an alpha-beta dimer. Requires pyruvate as cofactor.

Its subcellular location is the cytoplasm. The enzyme catalyses L-arginine + H(+) = agmatine + CO2. Part of the AaxABC system, catalyzes the decarboxylation of L-arginine. The arginine uptake by the bacterium in the macrophage may be a virulence factor against the host innate immune response. The polypeptide is Pyruvoyl-dependent arginine decarboxylase AaxB (aaxB) (Chlamydia caviae (strain ATCC VR-813 / DSM 19441 / 03DC25 / GPIC) (Chlamydophila caviae)).